Here is a 320-residue protein sequence, read N- to C-terminus: Foldase protein PrsA (320 aa).

An N-terminal signal peptide occupies residues 1-20 (MKMINKLIVPVTASALLLGA). The N-palmitoyl cysteine moiety is linked to residue cysteine 21. The S-diacylglycerol cysteine moiety is linked to residue cysteine 21. The 107-residue stretch at 139 to 245 (EDSKKASHIL…FGYHIIKADK (107 aa)) folds into the PpiC domain. The segment at 159-198 (EGLDDKEAKQKAEEIQKEVSKDPSKFGEIAKKESMDTGSA) is disordered.

Belongs to the PrsA family.

The protein resides in the cell membrane. It catalyses the reaction [protein]-peptidylproline (omega=180) = [protein]-peptidylproline (omega=0). Functionally, plays a major role in protein secretion by helping the post-translocational extracellular folding of several secreted proteins. The chain is Foldase protein PrsA from Staphylococcus aureus (strain MRSA252).